Reading from the N-terminus, the 280-residue chain is Hemin import ATP-binding protein HmuV (280 aa).

One can recognise an ABC transporter domain in the interval 26–260 (LAAAGGLRVH…GLLSEVYDQP (235 aa)). 59-66 (GPNGAGKS) is a binding site for ATP.

Belongs to the ABC transporter superfamily. Heme (hemin) importer (TC 3.A.1.14.5) family. The complex is composed of two ATP-binding proteins (HmuV), two transmembrane proteins (HmuU) and a solute-binding protein (HmuT).

It is found in the cell membrane. Part of the ABC transporter complex HmuTUV involved in hemin import. Responsible for energy coupling to the transport system. This Streptomyces coelicolor (strain ATCC BAA-471 / A3(2) / M145) protein is Hemin import ATP-binding protein HmuV.